The following is a 317-amino-acid chain: L-lactate dehydrogenase (317 aa).

Residues 16 to 17 (FV), D38, K43, Y69, and 83 to 84 (GA) each bind NAD(+). Positions 86 and 92 each coordinate substrate. NAD(+) is bound by residues S105, 122–124 (ATN), and S147. Residue 124–127 (NPVD) participates in substrate binding. Position 152 to 155 (152 to 155 (DTAR)) interacts with substrate. Beta-D-fructose 1,6-bisphosphate is bound by residues R157 and 169-172 (QNVH). H179 serves as the catalytic Proton acceptor. Phosphotyrosine is present on Y224. T233 provides a ligand contact to substrate.

This sequence belongs to the LDH/MDH superfamily. LDH family. As to quaternary structure, exists as a dimer and a tetramer (dimer of dimers). The conversion occurs via the binding of fructose 1,6-bisphosphate (FBP) to the dimer.

The protein localises to the cytoplasm. It carries out the reaction (S)-lactate + NAD(+) = pyruvate + NADH + H(+). Its pathway is fermentation; pyruvate fermentation to lactate; (S)-lactate from pyruvate: step 1/1. With respect to regulation, allosterically activated by fructose 1,6-bisphosphate (FBP). The improvement in affinity for substrate occurs in two steps; the binding of fructose 1,6-bisphosphate (FBP) to the dimer, and the dimer to tetramer conversion. In terms of biological role, catalyzes the conversion of lactate to pyruvate. This chain is L-lactate dehydrogenase, found in Geobacillus stearothermophilus (Bacillus stearothermophilus).